Consider the following 285-residue polypeptide: CBY1-interacting BAR domain-containing protein 1-B (285 aa).

The transit peptide at 1-48 directs the protein to the mitochondrion; that stretch reads MSQTPEARTRDNQTRQIQESVNNVEKHFGELCQIFAGYVRKTARLRDK. The BAR-like stretch occupies residues 11–221; that stretch reads DNQTRQIQES…DIDEEEDLEV (211 aa). Residues 142–184 adopt a coiled-coil conformation; that stretch reads RQIISQAETELQRATMDAARISQQLEETIDNFEKQKIKDIKKL. A compositionally biased stretch (polar residues) spans 241 to 261; sequence NSRSGSTSRAPSVISQPPGNR. Positions 241-285 are disordered; it reads NSRSGSTSRAPSVISQPPGNRQKNRMEDDEDGEDDNDENSTEDEN. Positions 267–285 are enriched in acidic residues; sequence EDDEDGEDDNDENSTEDEN.

This sequence belongs to the CIBAR family.

It is found in the cytoplasm. The protein resides in the cytoskeleton. Its subcellular location is the microtubule organizing center. The protein localises to the centrosome. It localises to the centriole. It is found in the cell projection. The protein resides in the cilium. Its subcellular location is the nucleus. The protein localises to the mitochondrion inner membrane. It localises to the flagellum. In terms of biological role, plays a critical role in regulating mitochondrial ultrastructure and function by maintaining the integrity of mitochondrial morphology, particularly the organization of cristae. Plays a crucial role in ciliogenesis. Plays a key role in the correct positioning of the annulus, a septin-based ring structure in the sperm flagellum, serving both as a physical barrier and a membrane diffusion barrier that separates the midpiece (MP) from the principal piece (PP). This is CBY1-interacting BAR domain-containing protein 1-B from Xenopus laevis (African clawed frog).